Reading from the N-terminus, the 173-residue chain is Thiol-disulfide oxidoreductase ResA (173 aa).

The helical; Signal-anchor for type II membrane protein transmembrane segment at 10-29 threads the bilayer; the sequence is VIILLILCGAVGFTLYQGFF. The 139-residue stretch at 35–173 folds into the Thioredoxin domain; sequence MQIGKEAPNF…LEGYLQKITP (139 aa). A disulfide bond links cysteine 73 and cysteine 76.

This sequence belongs to the thioredoxin family. ResA subfamily.

The protein localises to the cell membrane. Its pathway is protein modification; cytochrome c assembly. In terms of biological role, thiol-disulfide oxidoreductase which is required in disulfide reduction during c-type cytochrome synthesis. May accept reducing equivalents from CcdA, leading to breakage of disulfide bonds in apocytochrome c; following this reduction heme can be covalently attached. The chain is Thiol-disulfide oxidoreductase ResA from Bacillus cereus (strain ZK / E33L).